Reading from the N-terminus, the 1557-residue chain is Target of rapamycin complex 1 subunit KOG1 (1557 aa).

4 HEAT repeats span residues 548–586 (RHPP…WAVY), 588–625 (SLSI…IDYK), 777–814 (CMNT…GFQD), and 888–925 (RQEI…RYSN). Positions 1084-1098 (SESNSDSDTQSSNTS) are enriched in low complexity. Residues 1084–1114 (SESNSDSDTQSSNTSMKSHTSKKGPSGLYLL) are disordered. 7 WD repeats span residues 1207 to 1248 (NNKS…SKFS), 1252 to 1293 (PFGT…DTFK), 1296 to 1346 (SAWR…VEVD), 1350 to 1390 (KTSS…RDSM), 1400 to 1440 (KQGV…PVES), 1452 to 1492 (SQQK…NSFK), and 1517 to 1557 (TSDA…IDYF).

The protein belongs to the WD repeat RAPTOR family. In terms of assembly, the target of rapamycin complex 1 (TORC1) is composed of at least KOG1, LST8, TCO89 and either TOR1 (TORC1-A) or TOR2 (TORC1-B). Interacts with PIB2; following activation of PIB2 by glutamine or cysteine. TORC1 binds to and is inhibited by FKBP-rapamycin.

Its subcellular location is the cell membrane. It localises to the vacuole membrane. Component of TORC1, which regulates multiple cellular processes to control cell growth in response to environmental signals. Nutrient limitation and environmental stress signals cause inactivation of TORC1. Active TORC1 positively controls ribosome biogenesis via control of rRNA, ribosomal protein and tRNA gene expression, and rRNA processing. TORC1 positively controls protein biosynthesis by regulation of mRNA stability, translation initiation factor activity, and high-affinity amino acid permeases that serve to provide amino acids for use by the translation machinery. TORC1 also promotes growth by sequestering a number of nutrient and general stress-responsive transcription factors in the cytoplasm. TORC1 negatively controls macroautophagy, a process to recycle surplus cytoplasmic mass under nutrient starvation conditions. KOG1 may have a role in binding and recruiting substrates of TORC1. The polypeptide is Target of rapamycin complex 1 subunit KOG1 (KOG1) (Saccharomyces cerevisiae (strain ATCC 204508 / S288c) (Baker's yeast)).